We begin with the raw amino-acid sequence, 400 residues long: Enoyl-[acyl-carrier-protein] reductase [NADH] (400 aa).

Residues 48 to 53 (GSSSGY), 74 to 75 (FE), 111 to 112 (DA), and 139 to 140 (LA) contribute to the NAD(+) site. Position 225 (Tyr-225) interacts with substrate. Tyr-235 (proton donor) is an active-site residue. Residues Lys-244 and 273–275 (VVT) contribute to the NAD(+) site.

This sequence belongs to the TER reductase family. As to quaternary structure, monomer.

It carries out the reaction a 2,3-saturated acyl-[ACP] + NAD(+) = a (2E)-enoyl-[ACP] + NADH + H(+). It participates in lipid metabolism; fatty acid biosynthesis. Involved in the final reduction of the elongation cycle of fatty acid synthesis (FAS II). Catalyzes the reduction of a carbon-carbon double bond in an enoyl moiety that is covalently linked to an acyl carrier protein (ACP). This is Enoyl-[acyl-carrier-protein] reductase [NADH] from Aliivibrio salmonicida (strain LFI1238) (Vibrio salmonicida (strain LFI1238)).